A 145-amino-acid chain; its full sequence is MKSARRRSRELATQGLYQWLLSGSPAGEIDAQLRGAQGYDKADHEHLDAILHGVIRDSEALSADLAPCLDRPIDQLSPVERAVLLVAAYELKNHIDIPYRVVINEAVELAKTFGGADGYKYVNGVLDKLSAKLRVDETQAAARKQ.

It belongs to the NusB family.

Functionally, involved in transcription antitermination. Required for transcription of ribosomal RNA (rRNA) genes. Binds specifically to the boxA antiterminator sequence of the ribosomal RNA (rrn) operons. This Paraburkholderia phymatum (strain DSM 17167 / CIP 108236 / LMG 21445 / STM815) (Burkholderia phymatum) protein is Transcription antitermination protein NusB.